Consider the following 209-residue polypeptide: Eukaryotic translation initiation factor isoform 4E-2 (209 aa).

Positions 1 to 29 (MAEVEAALPVAATETPEVAAEGDAGAAEA) are disordered. The segment covering 9–29 (PVAATETPEVAAEGDAGAAEA) has biased composition (low complexity). MRNA-binding positions include 51–56 (PGAAWG), lysine 83, and 101–102 (WE). An intrachain disulfide couples cysteine 106 to cysteine 145. MRNA-binding positions include 152–157 (RQRQDK) and 197–200 (RSQK).

It belongs to the eukaryotic initiation factor 4E family. EIF4F is a multi-subunit complex, the composition of which varies with external and internal environmental conditions. It is composed of at least EIF4A, EIF4E and EIF4G. EIF4E is also known to interact with other partners. In higher plants two isoforms of EIF4F have been identified, named isoform EIF4F and isoform EIF(iso)4F. Isoform EIF4F has subunits p220 and p26, whereas isoform EIF(iso)4F has subunits p82 and p28. According to the redox status, the Cys-106-Cys-145 disulfide bridge may have a role in regulating protein function by affecting its ability to bind capped mRNA.

The protein resides in the cytoplasm. It is found in the nucleus. Its function is as follows. Component of the protein complex eIF4F, which is involved in the recognition of the mRNA cap, ATP-dependent unwinding of 5'-terminal secondary structure and recruitment of mRNA to the ribosome. Recognizes and binds the 7-methylguanosine-containing mRNA cap during an early step in the initiation of protein synthesis and facilitates ribosome binding by inducing the unwinding of the mRNAs secondary structures. In Triticum aestivum (Wheat), this protein is Eukaryotic translation initiation factor isoform 4E-2.